We begin with the raw amino-acid sequence, 600 residues long: Pyranose dehydrogenase (600 aa).

Positions 1 to 25 are cleaved as a signal peptide; it reads MFPRVVRLNSRLVSFALLGLQIANG. Asn99 and Asn114 each carry an N-linked (GlcNAc...) asparagine glycan. Tele-8alpha-FAD histidine is present on His127. Asn199, Asn275, Asn342, Asn399, and Asn507 each carry an N-linked (GlcNAc...) asparagine glycan. The Proton acceptor role is filled by His535. N-linked (GlcNAc...) asparagine glycosylation is present at Asn546. His579 is a catalytic residue.

This sequence belongs to the GMC oxidoreductase family. Monomer. Requires FAD as cofactor. N-glycosylated.

Its subcellular location is the secreted. It carries out the reaction pyranose + acceptor = pyranos-2-ulose + reduced acceptor.. It catalyses the reaction pyranose + acceptor = pyranos-3-ulose + reduced acceptor.. The enzyme catalyses pyranose + acceptor = pyranos-2,3-diulose + reduced acceptor.. The catalysed reaction is a pyranoside + acceptor = a pyranosid-3-ulose + reduced acceptor.. It carries out the reaction a pyranoside + acceptor = a pyranosid-3,4-diulose + reduced acceptor.. Functionally, catalyzes the single-oxidation or sequential double oxidation reaction of carbohydrates primarily at carbon-2 and/or carbon-3 with the concomitant reduction of the flavin. The enzyme exhibits a broad sugar substrate specificity, oxidizing different aldopyranoses to the corresponding C-1, C-2, C-3 or C-1,2, C-2,3 and C-3,4 (di)dehydro sugars with substrate-specific regioselectivity. Accepts only a narrow range of electron acceptors such as substituted benzoquinones and complexed metal ions and reacts extremely slowly with O(2) as acceptor. May play a role in the natural recycling of plant matter by oxidizing all major monosaccharides in lignocellulose and by reducing quinone compounds or reactive radical species generated during lignin depolymerization. The protein is Pyranose dehydrogenase of Agaricus xanthodermus (Poison yellow meadow mushroom).